The chain runs to 242 residues: Protein GrpE (242 aa).

Disordered regions lie at residues 1–75 (MSDD…DDEL) and 93–136 (VADL…QQIK). Positions 23 to 37 (DAESSAAEDASAADD) are enriched in low complexity. Acidic residues predominate over residues 38 to 49 (AAPEESTGDEQA). Over residues 50–64 (GETTAESSDAESVTV) the composition is skewed to polar residues. Acidic residues predominate over residues 96 to 108 (LETERDEAEETAS). The segment covering 124–133 (YKKRAKKRQQ) has biased composition (basic residues).

The protein belongs to the GrpE family. In terms of assembly, homodimer.

It localises to the cytoplasm. In terms of biological role, participates actively in the response to hyperosmotic and heat shock by preventing the aggregation of stress-denatured proteins, in association with DnaK and GrpE. It is the nucleotide exchange factor for DnaK and may function as a thermosensor. Unfolded proteins bind initially to DnaJ; upon interaction with the DnaJ-bound protein, DnaK hydrolyzes its bound ATP, resulting in the formation of a stable complex. GrpE releases ADP from DnaK; ATP binding to DnaK triggers the release of the substrate protein, thus completing the reaction cycle. Several rounds of ATP-dependent interactions between DnaJ, DnaK and GrpE are required for fully efficient folding. In Haloferax mediterranei (strain ATCC 33500 / DSM 1411 / JCM 8866 / NBRC 14739 / NCIMB 2177 / R-4) (Halobacterium mediterranei), this protein is Protein GrpE.